Reading from the N-terminus, the 269-residue chain is Tryptophan synthase alpha chain (269 aa).

Active-site proton acceptor residues include E49 and D60.

The protein belongs to the TrpA family. In terms of assembly, tetramer of two alpha and two beta chains.

The enzyme catalyses (1S,2R)-1-C-(indol-3-yl)glycerol 3-phosphate + L-serine = D-glyceraldehyde 3-phosphate + L-tryptophan + H2O. It participates in amino-acid biosynthesis; L-tryptophan biosynthesis; L-tryptophan from chorismate: step 5/5. Functionally, the alpha subunit is responsible for the aldol cleavage of indoleglycerol phosphate to indole and glyceraldehyde 3-phosphate. This is Tryptophan synthase alpha chain from Actinobacillus succinogenes (strain ATCC 55618 / DSM 22257 / CCUG 43843 / 130Z).